The sequence spans 401 residues: Argininosuccinate synthase (401 aa).

8–16 (AYSGGLDTS) serves as a coordination point for ATP. An L-citrulline-binding site is contributed by tyrosine 85. Glycine 115 serves as a coordination point for ATP. Threonine 117, asparagine 121, and aspartate 122 together coordinate L-aspartate. L-citrulline is bound at residue asparagine 121. L-citrulline is bound by residues arginine 125, serine 173, glutamate 258, and tyrosine 270.

The protein belongs to the argininosuccinate synthase family. Type 1 subfamily. In terms of assembly, homotetramer.

Its subcellular location is the cytoplasm. It carries out the reaction L-citrulline + L-aspartate + ATP = 2-(N(omega)-L-arginino)succinate + AMP + diphosphate + H(+). It functions in the pathway amino-acid biosynthesis; L-arginine biosynthesis; L-arginine from L-ornithine and carbamoyl phosphate: step 2/3. This chain is Argininosuccinate synthase, found in Staphylococcus aureus (strain Mu3 / ATCC 700698).